The primary structure comprises 879 residues: Band 4.1-like protein 1 (879 aa).

Residues 1–88 (MTTETGPDSE…TPSKAQKSPQ (88 aa)) form a disordered region. Over residues 17–35 (ETPQQPEAAAAVTTPVTPA) the composition is skewed to low complexity. Position 30 is a phosphothreonine (Thr30). Positions 38-50 (SHPETNSNEKHLT) are enriched in basic and acidic residues. A Phosphoserine modification is found at Ser75. Residues 76-87 (ERTTPSKAQKSP) are compositionally biased toward polar residues. At Thr79 the chain carries Phosphothreonine. One can recognise an FERM domain in the interval 97–378 (AICRVTLLDA…EHHTFFRLVS (282 aa)). A Phosphotyrosine modification is found at Tyr343. Phosphoserine occurs at positions 378, 430, 437, 461, and 466. The segment at 381–482 (PPPKGFLVMG…VRTPTKIKEL (102 aa)) is hydrophilic. The interval 428–501 (SRSLDGAEFS…HKQEFLDKPE (74 aa)) is disordered. The span at 444 to 501 (ENHDAGPEGDKREDDAESGGRRSEAEEGEVRTPTKIKELKPEQETTPRHKQEFLDKPE) shows a compositional bias: basic and acidic residues. Thr475 carries the phosphothreonine modification. Residues 483–541 (KPEQETTPRHKQEFLDKPEDVLLKHQASINELKRTLKEPNSKLIHRDRDWDRERRLPSS) are spectrin--actin-binding. At Ser510 the chain carries Phosphoserine. Basic and acidic residues predominate over residues 514–538 (LKRTLKEPNSKLIHRDRDWDRERRL). Residues 514-594 (LKRTLKEPNS…QDQERDAVFL (81 aa)) are disordered. A phosphoserine mark is found at Ser540, Ser541, Ser544, and Ser546. Residue Thr550 is modified to Phosphothreonine. The segment covering 550 to 577 (TPEKASERAGLREGSEEKVKPPRPRAPE) has biased composition (basic and acidic residues). A phosphoserine mark is found at Ser564, Ser578, Ser639, Ser648, Ser650, Ser665, Ser666, Ser671, Ser677, and Ser684. The tract at residues 657 to 696 (FAQDLKGPSSQEDESGGLEDSPDRGACSTPEMPQFESVKA) is disordered. Thr685 is subject to Phosphothreonine. Phosphoserine occurs at positions 721, 782, and 868. Positions 743–879 (PCITTETIST…EERDKKPQES (137 aa)) are C-terminal (CTD).

Interacts with AGAP2. Highest expression in brain, also present in kidney, olfactory epithelium, retina, sensory ganglia, gastrointestinal tract (only enteric neurons) and lung.

It is found in the cytoplasm. The protein localises to the cytoskeleton. Its function is as follows. May function to confer stability and plasticity to neuronal membrane via multiple interactions, including the spectrin-actin-based cytoskeleton, integral membrane channels and membrane-associated guanylate kinases. The sequence is that of Band 4.1-like protein 1 from Mus musculus (Mouse).